Here is a 228-residue protein sequence, read N- to C-terminus: 5'(3')-deoxyribonucleotidase, mitochondrial (228 aa).

Residues 1 to 31 (MIRLGGWCARRLCSAAVPAGRRGAAGGLGLA) constitute a mitochondrion transit peptide. Aspartate 41 (nucleophile) is an active-site residue. Aspartate 41 and aspartate 43 together coordinate Mg(2+). The Proton donor role is filled by aspartate 43. 8 residues coordinate substrate: aspartate 43, phenylalanine 49, phenylalanine 75, tryptophan 76, valine 77, tryptophan 96, threonine 130, and lysine 165. Aspartate 176 is a Mg(2+) binding site.

Belongs to the 5'(3')-deoxyribonucleotidase family. Homodimer. Mg(2+) is required as a cofactor. In terms of tissue distribution, highly expressed in heart, brain and skeletal muscle. Detected at very low levels in kidney and pancreas.

It is found in the mitochondrion. Dephosphorylates specifically the 5' and 2'(3')-phosphates of uracil and thymine deoxyribonucleotides, and so protects mitochondrial DNA replication from excess dTTP. Has only marginal activity towards dIMP and dGMP. The polypeptide is 5'(3')-deoxyribonucleotidase, mitochondrial (NT5M) (Homo sapiens (Human)).